Here is a 169-residue protein sequence, read N- to C-terminus: Putative adenylate kinase (169 aa).

Gly-10, Gly-12, Lys-13, Thr-14, and Thr-15 together coordinate ATP. Positions 28–51 (HLNDLVGTEGLYDGVDADRGSKIV) are NMP. Residues 98 to 108 (DRGDSPEKAAE) are LID. Arg-99 contributes to the ATP binding site.

This sequence belongs to the adenylate kinase family. AK6 subfamily. Interacts with uS11. Not a structural component of 40S pre-ribosomes, but transiently interacts with them by binding to uS11.

The catalysed reaction is AMP + ATP = 2 ADP. The enzyme catalyses ATP + H2O = ADP + phosphate + H(+). Broad-specificity nucleoside monophosphate (NMP) kinase that catalyzes the reversible transfer of the terminal phosphate group between nucleoside triphosphates and monophosphates. Also has ATPase activity. Involved in the late maturation steps of the 30S ribosomal particles, specifically 16S rRNA maturation. While NMP activity is not required for ribosome maturation, ATPase activity is. Associates transiently with small ribosomal subunit protein uS11. ATP hydrolysis breaks the interaction with uS11. May temporarily remove uS11 from the ribosome to enable a conformational change of the ribosomal RNA that is needed for the final maturation step of the small ribosomal subunit. The protein is Putative adenylate kinase of Halobacterium salinarum (strain ATCC 29341 / DSM 671 / R1).